The sequence spans 421 residues: Serine hydroxymethyltransferase (421 aa).

Residues L123 and G127–L129 each bind (6S)-5,6,7,8-tetrahydrofolate. At K232 the chain carries N6-(pyridoxal phosphate)lysine.

It belongs to the SHMT family. As to quaternary structure, homodimer. Pyridoxal 5'-phosphate is required as a cofactor.

The protein resides in the cytoplasm. The enzyme catalyses (6R)-5,10-methylene-5,6,7,8-tetrahydrofolate + glycine + H2O = (6S)-5,6,7,8-tetrahydrofolate + L-serine. Its pathway is one-carbon metabolism; tetrahydrofolate interconversion. It participates in amino-acid biosynthesis; glycine biosynthesis; glycine from L-serine: step 1/1. Functionally, catalyzes the reversible interconversion of serine and glycine with tetrahydrofolate (THF) serving as the one-carbon carrier. This reaction serves as the major source of one-carbon groups required for the biosynthesis of purines, thymidylate, methionine, and other important biomolecules. Also exhibits THF-independent aldolase activity toward beta-hydroxyamino acids, producing glycine and aldehydes, via a retro-aldol mechanism. The polypeptide is Serine hydroxymethyltransferase (Ehrlichia canis (strain Jake)).